The primary structure comprises 65 residues: Large ribosomal subunit protein bL35 (65 aa).

The protein belongs to the bacterial ribosomal protein bL35 family.

This is Large ribosomal subunit protein bL35 from Stenotrophomonas maltophilia (strain R551-3).